Here is a 337-residue protein sequence, read N- to C-terminus: Anthranilate phosphoribosyltransferase (337 aa).

5-phospho-alpha-D-ribose 1-diphosphate contacts are provided by residues glycine 82, 85-86 (GD), threonine 90, 92-95 (NIST), 110-118 (KHGGRSVSS), and serine 122. Glycine 82 contacts anthranilate. Serine 94 provides a ligand contact to Mg(2+). Arginine 168 is a binding site for anthranilate. Positions 226 and 227 each coordinate Mg(2+).

The protein belongs to the anthranilate phosphoribosyltransferase family. In terms of assembly, homodimer. Mg(2+) serves as cofactor.

The enzyme catalyses N-(5-phospho-beta-D-ribosyl)anthranilate + diphosphate = 5-phospho-alpha-D-ribose 1-diphosphate + anthranilate. It functions in the pathway amino-acid biosynthesis; L-tryptophan biosynthesis; L-tryptophan from chorismate: step 2/5. Catalyzes the transfer of the phosphoribosyl group of 5-phosphorylribose-1-pyrophosphate (PRPP) to anthranilate to yield N-(5'-phosphoribosyl)-anthranilate (PRA). The chain is Anthranilate phosphoribosyltransferase from Francisella tularensis subsp. holarctica (strain OSU18).